Here is a 389-residue protein sequence, read N- to C-terminus: Lipid-A-disaccharide synthase (389 aa).

It belongs to the LpxB family.

It catalyses the reaction a lipid X + a UDP-2-N,3-O-bis[(3R)-3-hydroxyacyl]-alpha-D-glucosamine = a lipid A disaccharide + UDP + H(+). The protein operates within bacterial outer membrane biogenesis; LPS lipid A biosynthesis. Its function is as follows. Condensation of UDP-2,3-diacylglucosamine and 2,3-diacylglucosamine-1-phosphate to form lipid A disaccharide, a precursor of lipid A, a phosphorylated glycolipid that anchors the lipopolysaccharide to the outer membrane of the cell. This Verminephrobacter eiseniae (strain EF01-2) protein is Lipid-A-disaccharide synthase.